The following is a 141-amino-acid chain: Small ribosomal subunit protein bS6 (141 aa).

Residues 96–141 (VTGQSEMLKAEENRSERRERRERPEHADSAEGDDSNDSDSSDNADE) form a disordered region. Over residues 103–124 (LKAEENRSERRERRERPEHADS) the composition is skewed to basic and acidic residues. Residues 125–141 (AEGDDSNDSDSSDNADE) show a composition bias toward acidic residues.

It belongs to the bacterial ribosomal protein bS6 family.

Binds together with bS18 to 16S ribosomal RNA. This chain is Small ribosomal subunit protein bS6, found in Pseudomonas putida (strain ATCC 700007 / DSM 6899 / JCM 31910 / BCRC 17059 / LMG 24140 / F1).